The primary structure comprises 298 residues: Probable 2-(5''-triphosphoribosyl)-3'-dephosphocoenzyme-A synthase 2 (298 aa).

Belongs to the CitG/MdcB family.

It catalyses the reaction 3'-dephospho-CoA + ATP = 2'-(5''-triphospho-alpha-D-ribosyl)-3'-dephospho-CoA + adenine. This Salmonella paratyphi A (strain ATCC 9150 / SARB42) protein is Probable 2-(5''-triphosphoribosyl)-3'-dephosphocoenzyme-A synthase 2.